The chain runs to 200 residues: Mpv17-like protein 2 (200 aa).

Helical transmembrane passes span 24-40 (ALLL…MAAG), 63-83 (ASMF…YLWL), and 102-122 (VLVD…LGLG).

It belongs to the peroxisomal membrane protein PXMP2/4 family. Interacts with the large mitochondrial ribosomal subunit.

The protein resides in the membrane. The protein localises to the mitochondrion inner membrane. Functionally, required for the assembly and stability of the mitochondrial ribosome. Is a positive regulator of mitochondrial protein synthesis. This is Mpv17-like protein 2 (Mpv17l2) from Mus musculus (Mouse).